Reading from the N-terminus, the 519-residue chain is MTQKDAAFHIERLLKFALKKGLIEELDVIPSRNALMDLFKIEKPYEGEVPEEELDTPSPILNKLLDYGVEIGLIEDTVTYRDLMDARIMGLLMPRESEVVRKFNEIASKDGIEKATEYFYELSKASNYIRMDRTSQNLYWRTPTEYGALEITINLSKPEKDPKEIEKAKKIPQSGYPKCLLCIENVGFAGNLNHPARQNLRIIPVKVAGEQWYFQYSPYVYYNEHCILLHEEHIPMKISEKTFVRLFDFIDQFPHYFMGSNADLPIVGGSILVHEHFQGGRHTFPMEEAPIEEYFIHPKYKEVKAGILKWPMSVIRLSSKDREKLTKLSSHILNVWKGYSDESVDVLAYSEKDGKIVPHNTITPIARFNKEGEYEIDLVLRNNRTTDKYPYGIFHPHEELHHIKKENIGLIEVMGLAVLPGRLKFELEEIRKILTGKEKFNKDMYDENHPLYKHLHWIEELIVKYGTHCTEEEAENYIKQEVGNKFLQVLLDAGVFKRDEKGKKAFEKFMETAGFKKLS.

This sequence belongs to the galactose-1-phosphate uridylyltransferase type 2 family.

The protein localises to the cytoplasm. It catalyses the reaction alpha-D-galactose 1-phosphate + UDP-alpha-D-glucose = alpha-D-glucose 1-phosphate + UDP-alpha-D-galactose. It participates in carbohydrate metabolism; galactose metabolism. This chain is Galactose-1-phosphate uridylyltransferase, found in Caldanaerobacter subterraneus subsp. tengcongensis (strain DSM 15242 / JCM 11007 / NBRC 100824 / MB4) (Thermoanaerobacter tengcongensis).